A 357-amino-acid polypeptide reads, in one-letter code: Cytochrome c peroxidase, mitochondrial (357 aa).

The N-terminal 23 residues, 1 to 23 (MSATALRIAPIASRTFQRRLGYL), are a transit peptide targeting the mitochondrion. The active-site Proton acceptor is the His116. Residues 189–212 (PWRSGRTDLPEDMTPDNGRLPDGD) are disordered. His239 serves as a coordination point for heme b. Trp255 serves as the catalytic Tryptophan radical intermediate.

Belongs to the peroxidase family. Cytochrome c peroxidase subfamily. In terms of assembly, forms a one-to-one complex with cytochrome c. Heme b serves as cofactor.

It localises to the mitochondrion matrix. Its subcellular location is the mitochondrion intermembrane space. It carries out the reaction 2 Fe(II)-[cytochrome c] + H2O2 + 2 H(+) = 2 Fe(III)-[cytochrome c] + 2 H2O. Its function is as follows. Destroys radicals which are normally produced within the cells and which are toxic to biological systems. The protein is Cytochrome c peroxidase, mitochondrial of Candida glabrata (strain ATCC 2001 / BCRC 20586 / JCM 3761 / NBRC 0622 / NRRL Y-65 / CBS 138) (Yeast).